Here is a 1086-residue protein sequence, read N- to C-terminus: Lysine-specific demethylase 4B (1086 aa).

The JmjN domain maps to 15 to 57 (IMTFRPTMDEFRDFNRYVAYIESQGAHRAGLAKIIPPKEWKPR). Residue Y133 participates in 2-oxoglutarate binding. Positions 146–309 (VAQWNIGNLR…YGKVATQCTC (164 aa)) constitute a JmjC domain. Positions 189 and 191 each coordinate Fe cation. Residues N199 and K207 each contribute to the 2-oxoglutarate site. Residues C235 and H241 each contribute to the Zn(2+) site. K242 contributes to the 2-oxoglutarate binding site. A Fe cation-binding site is contributed by H277. Zn(2+)-binding residues include C307 and C309. Positions 379 to 395 (SRPWRKAEEERRREPTR) are enriched in basic and acidic residues. Disordered stretches follow at residues 379-536 (SRPW…PPGA) and 575-624 (PMEL…LSVV). Residues 401 to 410 (SHRRRSQPKK) are compositionally biased toward basic residues. The span at 441-450 (MPEDEEEEEL) shows a compositional bias: acidic residues. Residues 456–467 (HEAEGVEEDGRG) show a composition bias toward basic and acidic residues. The span at 468-480 (KPRPTKARNKKKT) shows a compositional bias: basic residues. Residues 512 to 522 (GPAMGPMAAEG) are compositionally biased toward low complexity. Over residues 585–597 (QAQAGDSQGTTPF) the composition is skewed to polar residues. Position 599 is an N6-acetyllysine (K599). Residues 719-777 (MCFTSSGENTEPLPANSYVGEDGTSPLISCAHCCLQVHASCYGVRPELAKEGWTCSRCA) form a PHD-type 1 zinc finger. Residues 782-815 (TAECCLCNLRGGALQRTTEHRWIHVICAIAVPEV) form a C2HC pre-PHD-type zinc finger. A PHD-type 2 zinc finger spans residues 838 to 895 (LKCIYCRKRMKRVSGACIQCSYEHCSTSFHVTCAHAAGVLMEPDDWPYVVSITCLKHR). 2 Tudor domains span residues 905 to 962 (RTVS…CLRL) and 963 to 1019 (GPPP…EELP). The segment at 1024–1043 (SRLSLSTGTPQEPSFSGDDV) is disordered. Residues 1026–1037 (LSLSTGTPQEPS) show a composition bias toward polar residues.

The protein belongs to the JHDM3 histone demethylase family. Fe(2+) is required as a cofactor.

Its subcellular location is the nucleus. It carries out the reaction N(6),N(6),N(6)-trimethyl-L-lysyl(9)-[histone H3] + 2 2-oxoglutarate + 2 O2 = N(6)-methyl-L-lysyl(9)-[histone H3] + 2 formaldehyde + 2 succinate + 2 CO2. Its function is as follows. Histone demethylase that specifically demethylates 'Lys-9' of histone H3, thereby playing a role in histone code. Does not demethylate histone H3 'Lys-4', H3 'Lys-27', H3 'Lys-36' nor H4 'Lys-20'. Only able to demethylate trimethylated H3 'Lys-9', with a weaker activity than KDM4A, KDM4C and KDM4D. Demethylation of Lys residue generates formaldehyde and succinate. Plays a critical role in the development of the central nervous system (CNS). This Mus musculus (Mouse) protein is Lysine-specific demethylase 4B (Kdm4b).